The chain runs to 751 residues: Photosystem I P700 chlorophyll a apoprotein A1 (751 aa).

8 helical membrane passes run 72 to 95 (IFSA…FHGA), 158 to 181 (LYCT…FHYH), 197 to 221 (MNHH…HVSL), 293 to 311 (TAHH…GHMY), 348 to 371 (WHAQ…HHMY), 387 to 413 (LSLF…IFMV), 435 to 457 (AIIS…LYVH), and 532 to 550 (FLVH…LILL). Residues Cys-574 and Cys-583 each contribute to the [4Fe-4S] cluster site. Helical transmembrane passes span 590-611 (HVFL…HFSW) and 665-687 (LSAY…MFLF). Position 676 (His-676) interacts with chlorophyll a'. Met-684 and Tyr-692 together coordinate chlorophyll a. Residue Trp-693 coordinates phylloquinone. The chain crosses the membrane as a helical span at residues 725–745 (AVGVTHYLLGGIVTTWAFFLA).

The protein belongs to the PsaA/PsaB family. The PsaA/B heterodimer binds the P700 chlorophyll special pair and subsequent electron acceptors. PSI consists of a core antenna complex that captures photons, and an electron transfer chain that converts photonic excitation into a charge separation. The cyanobacterial PSI reaction center is composed of one copy each of PsaA,B,C,D,E,F,I,J,K,L,M and X, and forms trimeric complexes. It depends on PSI electron transfer chain: 5 chlorophyll a, 1 chlorophyll a', 2 phylloquinones and 3 4Fe-4S clusters. PSI core antenna: 90 chlorophyll a, 22 carotenoids, 3 phospholipids and 1 galactolipid. P700 is a chlorophyll a/chlorophyll a' dimer, A0 is one or more chlorophyll a, A1 is one or both phylloquinones and FX is a shared 4Fe-4S iron-sulfur center. as a cofactor.

It is found in the cellular thylakoid membrane. It carries out the reaction reduced [plastocyanin] + hnu + oxidized [2Fe-2S]-[ferredoxin] = oxidized [plastocyanin] + reduced [2Fe-2S]-[ferredoxin]. Functionally, psaA and PsaB bind P700, the primary electron donor of photosystem I (PSI), as well as the electron acceptors A0, A1 and FX. PSI is a plastocyanin/cytochrome c6-ferredoxin oxidoreductase, converting photonic excitation into a charge separation, which transfers an electron from the donor P700 chlorophyll pair to the spectroscopically characterized acceptors A0, A1, FX, FA and FB in turn. Oxidized P700 is reduced on the lumenal side of the thylakoid membrane by plastocyanin or cytochrome c6. The sequence is that of Photosystem I P700 chlorophyll a apoprotein A1 from Gloeothece citriformis (strain PCC 7424) (Cyanothece sp. (strain PCC 7424)).